The following is a 425-amino-acid chain: Serine--tRNA ligase (425 aa).

Residue 228–230 participates in L-serine binding; that stretch reads TAE. ATP is bound at residue 259–261; that stretch reads RSE. Glutamate 282 provides a ligand contact to L-serine. 346–349 contacts ATP; the sequence is EIAS. L-serine is bound at residue serine 382.

It belongs to the class-II aminoacyl-tRNA synthetase family. Type-1 seryl-tRNA synthetase subfamily. Homodimer. The tRNA molecule binds across the dimer.

It is found in the cytoplasm. The catalysed reaction is tRNA(Ser) + L-serine + ATP = L-seryl-tRNA(Ser) + AMP + diphosphate + H(+). The enzyme catalyses tRNA(Sec) + L-serine + ATP = L-seryl-tRNA(Sec) + AMP + diphosphate + H(+). Its pathway is aminoacyl-tRNA biosynthesis; selenocysteinyl-tRNA(Sec) biosynthesis; L-seryl-tRNA(Sec) from L-serine and tRNA(Sec): step 1/1. Its function is as follows. Catalyzes the attachment of serine to tRNA(Ser). Is also able to aminoacylate tRNA(Sec) with serine, to form the misacylated tRNA L-seryl-tRNA(Sec), which will be further converted into selenocysteinyl-tRNA(Sec). This Rickettsia felis (strain ATCC VR-1525 / URRWXCal2) (Rickettsia azadi) protein is Serine--tRNA ligase.